The sequence spans 242 residues: Ribonuclease PH (242 aa).

Residues R89 and 127-129 each bind phosphate; that span reads GTR.

Belongs to the RNase PH family. Homohexameric ring arranged as a trimer of dimers.

It carries out the reaction tRNA(n+1) + phosphate = tRNA(n) + a ribonucleoside 5'-diphosphate. In terms of biological role, phosphorolytic 3'-5' exoribonuclease that plays an important role in tRNA 3'-end maturation. Removes nucleotide residues following the 3'-CCA terminus of tRNAs; can also add nucleotides to the ends of RNA molecules by using nucleoside diphosphates as substrates, but this may not be physiologically important. Probably plays a role in initiation of 16S rRNA degradation (leading to ribosome degradation) during starvation. This Neisseria gonorrhoeae (strain ATCC 700825 / FA 1090) protein is Ribonuclease PH.